A 199-amino-acid polypeptide reads, in one-letter code: Ribonuclease HI (199 aa).

The interval 1–68 is not required for RNase H activity; the sequence is MPVVECDIQT…TAVVQPDRGG (68 aa). Residues 66–197 form the RNase H type-1 domain; that stretch reads RGGRVHAYFD…ADALANEALD (132 aa). The as active as intact RNase H stretch occupies residues 69–199; it reads RVHAYFDGAS…ALANEALDDA (131 aa). The Mg(2+) site is built by Asp-75, Glu-115, Asp-139, and Asp-189. Mn(2+)-binding residues include Asp-75, Glu-115, Asp-139, and Asp-189.

The protein belongs to the RNase H family. The cofactor is Mn(2+). Mg(2+) serves as cofactor. Requires Co(2+) as cofactor. Ni(2+) is required as a cofactor.

It is found in the cytoplasm. The enzyme catalyses Endonucleolytic cleavage to 5'-phosphomonoester.. Nuclease that specifically degrades the RNA of RNA-DNA hybrids; seems to act exonucleolytically on RNA/DNA hybrids. Endonucleolytically removes RNA primers from the Okazaki fragments of lagging strand synthesis on its own. Complements the temperature-sensitive phenotype of an E.coli double rnhA/rnhB (RNase H) disruption mutant. The chain is Ribonuclease HI (rnhA) from Halobacterium salinarum (strain ATCC 700922 / JCM 11081 / NRC-1) (Halobacterium halobium).